The sequence spans 199 residues: Recombination protein RecR (199 aa).

The C4-type zinc finger occupies 56–71 (CATCGNVAQEEQCNIC). Residues 79-174 (SVICVVEEPK…KVTRLASGLP (96 aa)) enclose the Toprim domain.

This sequence belongs to the RecR family.

Its function is as follows. May play a role in DNA repair. It seems to be involved in an RecBC-independent recombinational process of DNA repair. It may act with RecF and RecO. This chain is Recombination protein RecR, found in Streptomyces coelicolor (strain ATCC BAA-471 / A3(2) / M145).